The chain runs to 145 residues: Transcriptional regulator SlyA (145 aa).

The region spanning 2–135 is the HTH marR-type domain; it reads ELPLGSDLAR…LALLVARLEK (134 aa). Residues 49-72 constitute a DNA-binding region (H-T-H motif); that stretch reads QIQLAKAIGIEQPSLVRTLDQLEE.

The protein belongs to the SlyA family. As to quaternary structure, homodimer.

Transcription regulator that can specifically activate or repress expression of target genes. The sequence is that of Transcriptional regulator SlyA from Pectobacterium carotovorum subsp. carotovorum (strain PC1).